We begin with the raw amino-acid sequence, 208 residues long: Uracil phosphoribosyltransferase (208 aa).

5-phospho-alpha-D-ribose 1-diphosphate is bound by residues arginine 78, arginine 103, and 130–138 (DPMFATGGT). Uracil contacts are provided by residues isoleucine 193 and 198 to 200 (GDA). Aspartate 199 contacts 5-phospho-alpha-D-ribose 1-diphosphate.

The protein belongs to the UPRTase family. Requires Mg(2+) as cofactor.

It catalyses the reaction UMP + diphosphate = 5-phospho-alpha-D-ribose 1-diphosphate + uracil. It functions in the pathway pyrimidine metabolism; UMP biosynthesis via salvage pathway; UMP from uracil: step 1/1. Its activity is regulated as follows. Allosterically activated by GTP. In terms of biological role, catalyzes the conversion of uracil and 5-phospho-alpha-D-ribose 1-diphosphate (PRPP) to UMP and diphosphate. In Campylobacter jejuni (strain RM1221), this protein is Uracil phosphoribosyltransferase.